Here is a 503-residue protein sequence, read N- to C-terminus: Discoidin, CUB and LCCL domain-containing protein 1 (503 aa).

The N-terminal stretch at 1 to 25 is a signal peptide; sequence MGTGAGGPSVLALLFAVCAPLRLQA. At 26 to 250 the chain is on the extracellular side; it reads EELGDGCGHI…FTTPGMNITT (225 aa). 4 disulfide bridges follow: Cys-32/Cys-59, Cys-85/Cys-103, Cys-149/Cys-165, and Cys-169/Cys-191. The region spanning 32 to 141 is the CUB domain; sequence CGHIVTSQDS…RGFLLTYASS (110 aa). Asn-55 carries N-linked (GlcNAc...) asparagine glycosylation. The 97-residue stretch at 143–239 folds into the LCCL domain; sequence HPDLITCLER…RHGSLSEKRF (97 aa). Asn-247 carries an N-linked (GlcNAc...) asparagine glycan. A helical membrane pass occupies residues 251–271; the sequence is VAIPSVIFIALLLTGMGIFAI. The Cytoplasmic segment spans residues 272–503; that stretch reads CRKRKKKGNP…LNQTAMTALL (232 aa). Ser-305 bears the Phosphoserine mark. The residue at position 406 (Thr-406) is a Phosphothreonine. Residues 410-503 form a disordered region; the sequence is QSGYRVPGPR…LNQTAMTALL (94 aa). Polar residues predominate over residues 494-503; it reads LNQTAMTALL.

It localises to the membrane. This is Discoidin, CUB and LCCL domain-containing protein 1 (Dcbld1) from Mus musculus (Mouse).